An 833-amino-acid polypeptide reads, in one-letter code: Ventricular zone-expressed PH domain-containing protein homolog 1 (833 aa).

An interaction with TGFBR1 region spans residues 201–319; it reads TELLALMSQL…TYLVSQLANM (119 aa). A disordered region spans residues 458–505; sequence KGVGSDDGEDENRGDIPASISLSEIDPLGQGNDKLPFKTDTERSQLGE. A compositionally biased stretch (basic and acidic residues) spans 492–502; sequence LPFKTDTERSQ. Residues 663 to 833 are interaction with TGFBR1; sequence ESTFPQQKDL…RESREVTTYL (171 aa). The PH domain maps to 716 to 819; the sequence is QPLIEGKLKE…WLQCINVAVA (104 aa).

This sequence belongs to the MELT/VEPH family. Interacts with TGFBR1.

Its subcellular location is the cell membrane. In terms of biological role, interacts with TGF-beta receptor type-1 (TGFBR1) and inhibits dissociation of activated SMAD2 from TGFBR1, impeding its nuclear accumulation and resulting in impaired TGF-beta signaling. May also affect FOXO, Hippo and Wnt signaling. The polypeptide is Ventricular zone-expressed PH domain-containing protein homolog 1 (VEPH1) (Homo sapiens (Human)).